Reading from the N-terminus, the 542-residue chain is Cryptochrome-1 (542 aa).

Positions 5 to 140 (GANVIWFRHG…DFVEKVSHTL (136 aa)) constitute a Photolyase/cryptochrome alpha/beta domain. FAD-binding positions include arginine 237, serine 265, serine 267, glutamine 311, histidine 378, 410-412 (DAD), cysteine 416, and asparagine 419.

It belongs to the DNA photolyase class-1 family. Interacts with tim and per; promoted by light conditions. Interaction with tim irreversibly commits tim to proteasomal degradation. Interacts with l(1)G0136/CG8198. The cofactor is FAD. Expressed at higher levels in the head than in body and it is more expressed in antennae than in legs, wings and mouth appendages. Prominent expression is seen in cells of the lateral brain, which are close to or coincident with the clock neurons. Abundance oscillates in a circadian manner.

The protein resides in the cytoplasm. The protein localises to the perinuclear region. It localises to the nucleus. In terms of biological role, blue light-dependent regulator that is the input of the circadian feedback loop. Has no photolyase activity for cyclobutane pyrimidine dimers or 6-4 photoproducts. Regulation of expression by light suggests a role in photoreception for locomotor activity rhythms. Functions, together with per, as a transcriptional repressor required for the oscillation of peripheral circadian clocks and for the correct specification of clock cells. Genes directly activated by the transcription factors Clock (Clk) and cycle (cyc) are repressed by cry. Necessary for light-dependent magnetosensitivity, an intact circadian system is not required for the magnetoreception mechanism to operate. Required for both the naive and trained responses to magnetic field, consistent with the notion that cry is in the input pathway of magnetic sensing. The chain is Cryptochrome-1 from Drosophila melanogaster (Fruit fly).